The following is an 860-amino-acid chain: Ribosome-releasing factor 2, mitochondrial (860 aa).

The 293-residue stretch at 45–337 (DRTRNIGIIA…AVVNFLPSPL (293 aa)) folds into the tr-type G domain. GTP is bound by residues 54-61 (AHIDAGKT), 118-122 (DTPGH), and 172-175 (NKMD).

The protein belongs to the TRAFAC class translation factor GTPase superfamily. Classic translation factor GTPase family. EF-G/EF-2 subfamily.

Its subcellular location is the mitochondrion. Its function is as follows. Mitochondrial GTPase that mediates the disassembly of ribosomes from messenger RNA at the termination of mitochondrial protein biosynthesis. Not involved in the GTP-dependent ribosomal translocation step during translation elongation. In Debaryomyces hansenii (strain ATCC 36239 / CBS 767 / BCRC 21394 / JCM 1990 / NBRC 0083 / IGC 2968) (Yeast), this protein is Ribosome-releasing factor 2, mitochondrial.